The sequence spans 327 residues: Zinc transport protein ZntB (327 aa).

The Cytoplasmic segment spans residues 1–273; sequence MEAIKGSDVN…ARRTYTMSLM (273 aa). A helical membrane pass occupies residues 274–294; sequence AMVFLPSTFLTGLFGVNLGGI. Residues 295–300 lie on the Periplasmic side of the membrane; it reads PGGGWQ. Residues 301–321 traverse the membrane as a helical segment; the sequence is FGFSIFCILLVVLIGGVALWL. Residues 322 to 327 are Cytoplasmic-facing; it reads HRSKWL.

Belongs to the CorA metal ion transporter (MIT) (TC 1.A.35) family.

The protein resides in the cell inner membrane. It carries out the reaction Zn(2+)(out) + H(+)(out) = Zn(2+)(in) + H(+)(in). Functionally, zinc transporter. Acts as a Zn(2+):proton symporter, which likely mediates zinc ion uptake. This is Zinc transport protein ZntB from Escherichia coli O6:K15:H31 (strain 536 / UPEC).